Consider the following 1142-residue polypeptide: Serine/threonine-protein kinase dst2 (1142 aa).

The region spanning 20-276 (FELIEEIAEG…ATELLKHPFV (257 aa)) is the Protein kinase domain. ATP-binding positions include 26-34 (IAEGSFGTV) and Lys49. Asp141 acts as the Proton acceptor in catalysis. A compositionally biased stretch (acidic residues) spans 300-322 (LEEGGDEDEDSSEQEGMDSDDKD). Disordered regions lie at residues 300-492 (LEEG…KTLE), 515-636 (KKQQ…KSTP), 744-768 (ETNH…TEQR), 939-974 (SIEE…GSVT), and 1040-1142 (EEQK…DNQD). Positions 323 to 336 (SDLKKSVGTSDRKS) are enriched in basic and acidic residues. Residues 355 to 365 (QRKSTGQNLQL) are compositionally biased toward polar residues. Low complexity predominate over residues 371-390 (QQSSSSSSSSSSSLSSQSLQ). Residues 391-413 (PQAVNKSTDRLSANINGSNTKSN) are compositionally biased toward polar residues. Residues 421–452 (AAASASASSLNLSTGNLQQSLSGSGSITTNSG) are compositionally biased toward low complexity. The segment covering 467 to 477 (SSDDRSPDIRT) has biased composition (basic and acidic residues). Residues 541–554 (KQNAAKATQQQKQS) show a composition bias toward low complexity. Basic and acidic residues-rich tracts occupy residues 555-588 (AAKE…KKNQ), 597-635 (KVTD…DKST), 744-760 (ETNH…EQHI), and 939-969 (SIEE…EQKK). The stretch at 716–1050 (QEYHTVLREN…EQKKSKLKLK (335 aa)) forms a coiled coil. Low complexity predominate over residues 1068–1091 (TGTTPPSTSSNQKTLNNSNGASSN).

This sequence belongs to the protein kinase superfamily. STE Ser/Thr protein kinase family. STE20 subfamily. Mg(2+) serves as cofactor.

It catalyses the reaction L-seryl-[protein] + ATP = O-phospho-L-seryl-[protein] + ADP + H(+). The catalysed reaction is L-threonyl-[protein] + ATP = O-phospho-L-threonyl-[protein] + ADP + H(+). In Dictyostelium discoideum (Social amoeba), this protein is Serine/threonine-protein kinase dst2.